The primary structure comprises 153 residues: Deoxyuridine 5'-triphosphate nucleotidohydrolase (153 aa).

Substrate contacts are provided by residues 71–73 (RSG), N84, 88–90 (LID), and M98.

Belongs to the dUTPase family. Mg(2+) is required as a cofactor.

It catalyses the reaction dUTP + H2O = dUMP + diphosphate + H(+). It functions in the pathway pyrimidine metabolism; dUMP biosynthesis; dUMP from dCTP (dUTP route): step 2/2. In terms of biological role, this enzyme is involved in nucleotide metabolism: it produces dUMP, the immediate precursor of thymidine nucleotides and it decreases the intracellular concentration of dUTP so that uracil cannot be incorporated into DNA. In Hydrogenovibrio crunogenus (strain DSM 25203 / XCL-2) (Thiomicrospira crunogena), this protein is Deoxyuridine 5'-triphosphate nucleotidohydrolase.